Here is a 259-residue protein sequence, read N- to C-terminus: Phosphatidylglycerol--prolipoprotein diacylglyceryl transferase (259 aa).

4 consecutive transmembrane segments (helical) span residues 9 to 29 (IIFY…VVGI), 55 to 75 (FITY…VLLY), 92 to 112 (EGGM…YLFC), and 117 to 137 (VNFL…LFLG). An a 1,2-diacyl-sn-glycero-3-phospho-(1'-sn-glycerol)-binding site is contributed by R138. The next 3 membrane-spanning stretches (helical) occupy residues 172–192 (QLYE…YATF), 201–221 (GLNS…IEIF), and 228–248 (IGFI…MLIL).

It belongs to the Lgt family.

It is found in the cell inner membrane. The enzyme catalyses L-cysteinyl-[prolipoprotein] + a 1,2-diacyl-sn-glycero-3-phospho-(1'-sn-glycerol) = an S-1,2-diacyl-sn-glyceryl-L-cysteinyl-[prolipoprotein] + sn-glycerol 1-phosphate + H(+). It functions in the pathway protein modification; lipoprotein biosynthesis (diacylglyceryl transfer). In terms of biological role, catalyzes the transfer of the diacylglyceryl group from phosphatidylglycerol to the sulfhydryl group of the N-terminal cysteine of a prolipoprotein, the first step in the formation of mature lipoproteins. The chain is Phosphatidylglycerol--prolipoprotein diacylglyceryl transferase from Rickettsia akari (strain Hartford).